The chain runs to 283 residues: Polyprenyl-phosphate transporter (283 aa).

9 consecutive transmembrane segments (helical) span residues 27 to 47, 51 to 71, 85 to 105, 112 to 132, 148 to 168, 169 to 189, 197 to 217, 230 to 250, and 255 to 275; these read GTIALLLGIYNQFIASISGIF, FWPSFTFLIPIIIGMLLAMGS, IPTMFFFGGLIIGIVPYLLKI, FTTKHYMMVIAGIAILIVITL, TSLIIKYFIAGMCASSAMLLP, GISGSFMLLVFGVYGTVMLAI, FAGLPILLAVGFGVLAGFIIS, LMTFALIIGFVVGSLFAVFPG, and IVMWFVSLVVFIIGFIVSLTL.

This sequence belongs to the PopT family.

It is found in the cell membrane. Active in alkaline conditions. In terms of biological role, flippase that catalyzes the transport of undecaprenyl phosphate (UndP) across the cytoplasmic membrane, from the external side to the cytoplasmic side. Is involved in UndP recycling during peptidoglycan synthesis. Necessary for peptidoglycan maintenance. This Staphylococcus aureus (strain NCTC 8325 / PS 47) protein is Polyprenyl-phosphate transporter.